The following is a 133-amino-acid chain: Profilin-3 (133 aa).

Cys-13 and Cys-117 are disulfide-bonded. The short motif at 83-99 is the Involved in PIP2 interaction element; it reads AVIRGKKGSGGITIKKT. Residue Thr-113 is modified to Phosphothreonine.

It belongs to the profilin family. As to quaternary structure, occurs in many kinds of cells as a complex with monomeric actin in a 1:1 ratio. Post-translationally, phosphorylated by MAP kinases.

It is found in the cytoplasm. Its subcellular location is the cytoskeleton. Functionally, binds to actin and affects the structure of the cytoskeleton. At high concentrations, profilin prevents the polymerization of actin, whereas it enhances it at low concentrations. This chain is Profilin-3, found in Corylus avellana (European hazel).